The chain runs to 83 residues: Retinal cone rhodopsin-sensitive cGMP 3',5'-cyclic phosphodiesterase subunit gamma (83 aa).

Positions 1–51 are disordered; it reads MSDSPCLSPPAPSQGPTTPRKGPPKFKQRQTRQFKSKPPKKGVKGFGDDIP. The span at 22-43 shows a compositional bias: basic residues; the sequence is GPPKFKQRQTRQFKSKPPKKGV.

It belongs to the rod/cone cGMP-PDE gamma subunit family. In terms of assembly, tetramer composed of two catalytic chains (alpha and beta), and two inhibitory chains (gamma).

The enzyme catalyses 3',5'-cyclic GMP + H2O = GMP + H(+). Its function is as follows. Participates in processes of transmission and amplification of the visual signal. cGMP-PDEs are the effector molecules in G-protein-mediated phototransduction in vertebrate rods and cones. The polypeptide is Retinal cone rhodopsin-sensitive cGMP 3',5'-cyclic phosphodiesterase subunit gamma (Pde6h) (Rattus norvegicus (Rat)).